The chain runs to 157 residues: Regulator of Ty1 transposition protein 102 (157 aa).

Residue serine 77 is modified to Phosphoserine. Residues 95–157 (SLMTSHTKGD…TKESKDVKMN (63 aa)) form a disordered region. Residues 96–116 (LMTSHTKGDTSKATGAPSANQ) show a composition bias toward polar residues. Serine 122 is modified (phosphoserine). Residues 147–157 (NTKESKDVKMN) show a composition bias toward basic and acidic residues.

As to quaternary structure, interacts with STH1 and SWI3. Component of the two forms of the RSC complex composed of at least either RSC1 or RSC2, and ARP7, ARP9, LDB7, NPL6, RSC3, RSC30, RSC4, RSC58, RSC6, RSC8, RSC9, SFH1, STH1, HTL1 and probably RTT102. The complexes interact with histone and histone variant components of centromeric chromatin. Probable additional component of the SWI/SNF global transcription activator complex. The 1.14 MDa SWI/SNF complex is composed of 11 different subunits: one copy each of SWI1, SNF2/SWI2, SNF5, SNF12/SWP73, ARP7/SWP61, ARP9/SWP59; two copies each of SWI3, SNF6, SNF11, SWP82; and three copies of TAF14/SWP29.

Its subcellular location is the nucleus. In terms of biological role, probable component of the chromatin structure-remodeling complex (RSC) which is involved in transcription regulation and nucleosome positioning. RSC is responsible for the transfer of a histone octamer from a nucleosome core particle to naked DNA. The reaction requires ATP and involves an activated RSC-nucleosome intermediate. Remodeling reaction also involves DNA translocation, DNA twist and conformational change. As a reconfigurer of centromeric and flanking nucleosomes, RSC complex is required both for proper kinetochore function in chromosome segregation and, via a PKC1-dependent signaling pathway, for organization of the cellular cytoskeleton. Probable component of the SWI/SNF complex, an ATP-dependent chromatin-remodeling complex, is required for the positive and negative regulation of gene expression of a large number of genes. It changes chromatin structure by altering DNA-histone contacts within a nucleosome, leading eventually to a change in nucleosome position, thus facilitating or repressing binding of gene-specific transcription factors. The protein is Regulator of Ty1 transposition protein 102 (RTT102) of Saccharomyces cerevisiae (strain ATCC 204508 / S288c) (Baker's yeast).